The primary structure comprises 429 residues: UPF0597 protein AHA_1619 (429 aa).

The protein belongs to the UPF0597 family.

This is UPF0597 protein AHA_1619 from Aeromonas hydrophila subsp. hydrophila (strain ATCC 7966 / DSM 30187 / BCRC 13018 / CCUG 14551 / JCM 1027 / KCTC 2358 / NCIMB 9240 / NCTC 8049).